The sequence spans 208 residues: N-(5'-phosphoribosyl)anthranilate isomerase (208 aa).

Belongs to the TrpF family.

It catalyses the reaction N-(5-phospho-beta-D-ribosyl)anthranilate = 1-(2-carboxyphenylamino)-1-deoxy-D-ribulose 5-phosphate. Its pathway is amino-acid biosynthesis; L-tryptophan biosynthesis; L-tryptophan from chorismate: step 3/5. The sequence is that of N-(5'-phosphoribosyl)anthranilate isomerase from Chlamydia trachomatis serovar A (strain ATCC VR-571B / DSM 19440 / HAR-13).